A 135-amino-acid polypeptide reads, in one-letter code: Small ribosomal subunit protein bS16 (135 aa).

Positions 105 to 120 (DEKKKPVLKPKTEKAA) are enriched in basic and acidic residues. A disordered region spans residues 105–135 (DEKKKPVLKPKTEKAAPEAAAPEAEATEEQA).

This sequence belongs to the bacterial ribosomal protein bS16 family.

In Clavibacter sepedonicus (Clavibacter michiganensis subsp. sepedonicus), this protein is Small ribosomal subunit protein bS16.